Reading from the N-terminus, the 180-residue chain is MARLKEKIQTDVNAAMMQRFGYKNVMQIPRLEKVVVNMGLGEAIQNPKGLDAAVGDLTRITGQKPVITTAKKSIAGFKLREGMKIGCKVTLRGDKMYDFVDKLVNLSLPRVRDFRGVSPKSFDGRGNYTLGLKEQLIFPEIEYDKIDRLRGMDVTFVTTAKTDEEARELLRLIGMPFRAE.

Belongs to the universal ribosomal protein uL5 family. Part of the 50S ribosomal subunit; part of the 5S rRNA/L5/L18/L25 subcomplex. Contacts the 5S rRNA and the P site tRNA. Forms a bridge to the 30S subunit in the 70S ribosome.

Its function is as follows. This is one of the proteins that bind and probably mediate the attachment of the 5S RNA into the large ribosomal subunit, where it forms part of the central protuberance. In the 70S ribosome it contacts protein S13 of the 30S subunit (bridge B1b), connecting the 2 subunits; this bridge is implicated in subunit movement. Contacts the P site tRNA; the 5S rRNA and some of its associated proteins might help stabilize positioning of ribosome-bound tRNAs. The polypeptide is Large ribosomal subunit protein uL5 (Heliobacterium modesticaldum (strain ATCC 51547 / Ice1)).